Here is a 700-residue protein sequence, read N- to C-terminus: ABC transporter B family member 26, chloroplastic (700 aa).

Residues 1-59 (MAQQVLGCTSRPIRVSLHRCSVITTSDTIRRKNLRFVRNPRLSFSLQSSTRNYRLPSIN) constitute a chloroplast transit peptide. The next 3 helical transmembrane spans lie at 137–157 (WVIF…ITIP), 182–202 (LVTL…FFGI), and 268–288 (LIYL…ICCI). The 283-residue stretch at 139–421 (IFAAFSTLIV…VGDNLSSLMQ (283 aa)) folds into the ABC transmembrane type-1 domain. The ABC transporter domain maps to 455–694 (IEFVDVSFSY…DGLYARLTKR (240 aa)). Residue 490-497 (GLSGSGKS) coordinates ATP.

It belongs to the ABC transporter superfamily. ABCB family. Multidrug resistance exporter (TC 3.A.1.201) subfamily.

Its subcellular location is the plastid. It localises to the chloroplast membrane. The polypeptide is ABC transporter B family member 26, chloroplastic (ABCB26) (Arabidopsis thaliana (Mouse-ear cress)).